The chain runs to 142 residues: MGLKLNGRYISLILAVQIAYLVQAVRAAGKCDAVFKGFSDCLLKLGDSMANYPQGLDDKTNIKTVCTYWEDFHSCTVTALTDCQEGAKDMWDKLRKESKNLNIQGSLFELCGGGNGAAGPLLPALPVLLVSLSAALATWLSF.

Residues 1–27 form the signal peptide; it reads MGLKLNGRYISLILAVQIAYLVQAVRA. A lipid anchor (GPI-anchor amidated glycine) is attached at G116. The propeptide at 117 to 142 is removed in mature form; it reads AAGPLLPALPVLLVSLSAALATWLSF.

Belongs to the neuritin family. In terms of assembly, component of the outer core of AMPAR complex. AMPAR complex consists of an inner core made of 4 pore-forming GluA/GRIA proteins (GRIA1, GRIA2, GRIA3 and GRIA4) and 4 major auxiliary subunits arranged in a twofold symmetry. One of the two pairs of distinct binding sites is occupied either by CNIH2, CNIH3 or CACNG2, CACNG3. The other harbors CACNG2, CACNG3, CACNG4, CACNG8 or GSG1L. This inner core of AMPAR complex is complemented by outer core constituents binding directly to the GluA/GRIA proteins at sites distinct from the interaction sites of the inner core constituents. Outer core constituents include at least PRRT1, PRRT2, CKAMP44/SHISA9, FRRS1L and NRN1. The proteins of the inner and outer core serve as a platform for other, more peripherally associated AMPAR constituents. Alone or in combination, these auxiliary subunits control the gating and pharmacology of the AMPAR complex and profoundly impact their biogenesis and protein processing.

It is found in the cell membrane. The protein localises to the synapse. Its function is as follows. Promotes neurite outgrowth and especially branching of neuritic processes in primary hippocampal and cortical cells. This chain is Neuritin (NRN1), found in Bos taurus (Bovine).